The sequence spans 229 residues: UPF0758 protein Cagg_0777 (229 aa).

The 123-residue stretch at P105–G227 folds into the MPN domain. 3 residues coordinate Zn(2+): H176, H178, and D189. The JAMM motif signature appears at H176–D189.

Belongs to the UPF0758 family.

This chain is UPF0758 protein Cagg_0777, found in Chloroflexus aggregans (strain MD-66 / DSM 9485).